We begin with the raw amino-acid sequence, 980 residues long: Putative leucine-rich repeat receptor-like serine/threonine-protein kinase At2g24130 (980 aa).

The N-terminal stretch at 1–20 (MDYCSLLVVSFLITVMTVLA) is a signal peptide. Residues 21 to 593 (SKENDHELIK…ACKKKHKYPS (573 aa)) are Extracellular-facing. N-linked (GlcNAc...) asparagine glycans are attached at residues asparagine 55 and asparagine 88. 8 LRR repeats span residues 65–89 (STQV…IANL), 90–113 (TGLT…IGSL), 115–138 (ETLK…LGLL), 139–162 (NRLV…LFCN), 165–189 (SSSL…YHCH), 191–214 (KELR…LSNS), 215–238 (TNLK…VISK), and 240–263 (PQLQ…NLEP). N-linked (GlcNAc...) asparagine glycosylation is found at asparagine 152, asparagine 162, asparagine 175, and asparagine 213. Residues asparagine 257 and asparagine 270 are each glycosylated (N-linked (GlcNAc...) asparagine). LRR repeat units follow at residues 271–295 (SSDL…VRHL), 296–320 (SVNL…ISNL), 322–344 (NLTL…LCKL), 345–370 (SKLE…DIPR), 372–391 (GLLD…SFGN), 392–416 (LSQL…LGKC), 417–440 (INLE…VVSN), 442–463 (RNLK…PLEL), 464–490 (SKMD…LGSC), 491–514 (IALE…LGQL), 515–537 (PYLK…SFQQ), and 539–563 (STLK…SFSK). N-linked (GlcNAc...) asparagine glycosylation is found at asparagine 322 and asparagine 327. N-linked (GlcNAc...) asparagine glycosylation is found at asparagine 380 and asparagine 391. N-linked (GlcNAc...) asparagine glycans are attached at residues asparagine 428 and asparagine 449. Asparagine 497 carries N-linked (GlcNAc...) asparagine glycosylation. Asparagine 545 and asparagine 554 each carry an N-linked (GlcNAc...) asparagine glycan. The helical transmembrane segment at 594–614 (VLLPVLLSLIATPVLCVFGYP) threads the bilayer. At 615–980 (LVQRSRFGKN…SQETQGEASS (366 aa)) the chain is on the cytoplasmic side. A Phosphothreonine modification is found at threonine 658. Residues 661-960 (FNASSLIGSG…HEMGRLKEYL (300 aa)) enclose the Protein kinase domain. ATP contacts are provided by residues 667–675 (IGSGRFGHV) and lysine 689. Tyrosine 775 bears the Phosphotyrosine mark. Aspartate 788 acts as the Proton acceptor in catalysis. A Phosphotyrosine modification is found at tyrosine 841.

The protein belongs to the protein kinase superfamily. Ser/Thr protein kinase family.

Its subcellular location is the cell membrane. It catalyses the reaction L-seryl-[protein] + ATP = O-phospho-L-seryl-[protein] + ADP + H(+). The enzyme catalyses L-threonyl-[protein] + ATP = O-phospho-L-threonyl-[protein] + ADP + H(+). The chain is Putative leucine-rich repeat receptor-like serine/threonine-protein kinase At2g24130 from Arabidopsis thaliana (Mouse-ear cress).